Reading from the N-terminus, the 445-residue chain is Na(+)-translocating NADH-quinone reductase subunit A (445 aa).

It belongs to the NqrA family. As to quaternary structure, composed of six subunits; NqrA, NqrB, NqrC, NqrD, NqrE and NqrF.

It catalyses the reaction a ubiquinone + n Na(+)(in) + NADH + H(+) = a ubiquinol + n Na(+)(out) + NAD(+). Its function is as follows. NQR complex catalyzes the reduction of ubiquinone-1 to ubiquinol by two successive reactions, coupled with the transport of Na(+) ions from the cytoplasm to the periplasm. NqrA to NqrE are probably involved in the second step, the conversion of ubisemiquinone to ubiquinol. The protein is Na(+)-translocating NADH-quinone reductase subunit A of Pseudomonas aeruginosa (strain ATCC 15692 / DSM 22644 / CIP 104116 / JCM 14847 / LMG 12228 / 1C / PRS 101 / PAO1).